Consider the following 635-residue polypeptide: Protein OPG056 (635 aa).

Belongs to the orthopoxvirus OPG056 family. As to quaternary structure, interacts with protein OPG164. Interacts with protein OPG064.

It is found in the virion membrane. It localises to the host endosome. Its function is as follows. Plays a role in intracellular enveloped virus (IEV) transport to the cell surface through microtubule transport. Together with protein OPG064, forms a complex that interacts with host KLC2 (kinesin light chain isoform 2) to engage the kinesin-1 complex and thereby promote IEV trafficking. In Homo sapiens (Human), this protein is Protein OPG056 (OPG056).